Here is a 166-residue protein sequence, read N- to C-terminus: Regulatory protein RecX (166 aa).

The protein belongs to the RecX family.

The protein resides in the cytoplasm. In terms of biological role, modulates RecA activity. The sequence is that of Regulatory protein RecX from Salmonella paratyphi A (strain ATCC 9150 / SARB42).